The sequence spans 410 residues: uncharacterized protein (410 aa).

The signal sequence occupies residues 1–41 (MVKSFRMKALIAGAAVAAAVSAGAVSDVPAAKVLQPTAAYA).

Interacts with PcrA, Pdp, YclM, YkvL, YhcQ and YomL. The interaction with PcrA is not essential for cell viability or repair of UV-induced lesions.

Its subcellular location is the secreted. Its function is as follows. Increases the processivity of the PcrA helicase, but does not bind to DNA. This is an uncharacterized protein from Bacillus subtilis (strain 168).